The sequence spans 62 residues: Defensin BmKDfsin5 (62 aa).

The N-terminal stretch at 1-24 (MKVIALFFLFAFIFCTLEVAIVEA) is a signal peptide. 3 cysteine pairs are disulfide-bonded: C28–C49, C35–C57, and C39–C59.

The protein belongs to the invertebrate defensin family. Type 2 subfamily. As to expression, highly expressed in non-venom gland (hemolymph) and moderately expressed in venom gland.

It is found in the secreted. In terms of biological role, antibacterial peptide active against Gram-positive bacteria (including S.aureus ATCC25923 (MIC=2.5 uM), M.luteus AB93113 (MIC=2.5 uM), and the antibiotic-resistant S.epidermidis PRSE P1389 (MIC=1.25 uM)), but not against Gram-negative bacteria (including E.coli and P.aeruginosa). Also has weak blocking activity on Kv1.1/KCNA1 (8.7% inhibition), Kv1.2/KCNA2 (10.2% inhibition), Kv1.3/KCNA3 (9.0% inhibition), KCa3.1/KCNN4/IK (9.1% inhibition), KCa2.3/KCNN3/SK3 (46.3% inhibition) and Kv11.1/KCNH2/ERG1 (16.9% inhibition) channels (tested at 1 uM). It inhibits potassium channel current by interacting with the pore region. This chain is Defensin BmKDfsin5, found in Olivierus martensii (Manchurian scorpion).